A 193-amino-acid polypeptide reads, in one-letter code: Non-specific lipid transfer protein GPI-anchored 10 (193 aa).

The first 24 residues, 1–24, serve as a signal peptide directing secretion; the sequence is MASSTLLITLLISLSAFFLRMVLA. 4 disulfides stabilise this stretch: Cys30/Cys71, Cys40/Cys55, Cys56/Cys98, and Cys69/Cys107. 3 N-linked (GlcNAc...) asparagine glycosylation sites follow: Asn76, Asn87, and Asn103. Positions 109–140 are disordered; the sequence is SSFPGEAPSDSSSVAPPPSSSTGSQISQGAKN. Residues 116-132 are compositionally biased toward low complexity; it reads PSDSSSVAPPPSSSTGS. An N-linked (GlcNAc...) asparagine glycan is attached at Asn140. Ser168 carries the GPI-anchor amidated serine lipid modification. A propeptide spans 169–193 (removed in mature form); it reads SGSKSEIQLTIFALAAILPAALLLI.

The protein belongs to the plant LTP family.

The protein resides in the cell membrane. Probable lipid transfer protein. This chain is Non-specific lipid transfer protein GPI-anchored 10, found in Arabidopsis thaliana (Mouse-ear cress).